The primary structure comprises 287 residues: Troponin T, cardiac muscle (287 aa).

Composition is skewed to acidic residues over residues 1 to 31 and 44 to 59; these read MSDVEETVDEYEEQEEAAVEEHEESVEEEAG and EDGEEEEGREAEDGPV. Disordered regions lie at residues 1 to 85 and 124 to 208; these read MSDV…GERV and KDRI…EKKK. N-acetylserine is present on S2. Position 2 is a phosphoserine; by CK2 (S2). Positions 66–79 are enriched in pro residues; the sequence is APGPFMPNLVPPKI. Composition is skewed to basic and acidic residues over residues 124–173 and 192–208; these read KDRI…DEAR and QAERKSGKRQTEREKKK. S197 bears the Phosphoserine; by PKC/PRKCA mark. T202 carries the phosphothreonine; by PKC/PRKCA and RAF1 modification. T283 carries the phosphothreonine; by PKC/PRKCA modification.

Belongs to the troponin T family. Phosphorylation at Thr-202 by PRKCA induces significant reduction in myofilament calcium sensitivity and actomyosin ATPase activity.

Its function is as follows. Troponin T is the tropomyosin-binding subunit of troponin, the thin filament regulatory complex which confers calcium-sensitivity to striated muscle actomyosin ATPase activity. The chain is Troponin T, cardiac muscle (TNNT2) from Ovis aries (Sheep).